The primary structure comprises 327 residues: 2-oxoglutarate-dependent dioxygenase traH (327 aa).

The 108-residue stretch at 183–290 (TTDAAMFLKL…YAVPAFWHGD (108 aa)) folds into the Fe2OG dioxygenase domain. Fe cation-binding residues include His-211, Asp-213, and His-270. A 2-oxoglutarate-binding site is contributed by Arg-280.

Belongs to the iron/ascorbate-dependent oxidoreductase family. Requires Fe(2+) as cofactor.

It functions in the pathway secondary metabolite biosynthesis. Its function is as follows. 2-oxoglutarate-dependent dioxygenase; part of the tra gene cluster that produces terrestric acid. The clavatol biosynthesis cluster cla and the terrestric acid cluster tra are both involved in the production of peniphenones and penilactones. The non-reducing PKS claF is responsible for the formation of clavatol from successive condensations of 3 malonyl-CoA units, presumably with a simple acetyl-CoA starter unit, and 2 methylation steps. The esterase claE probably collaborates with claF by catalyzing the hydrolysis of ACP-bound acyl intermediates to free the ACP from stalled intermediates. The clavatol oxidase claD then converts clavatol to hydroxyclavatol. Spontaneous dehydration of hydroxyclavatol leads to the accumulation of the highly active ortho-quinone methide. On the other hand, the PKS-NRPS hybrid traA is involved in the formation of crustosic acid, with the help of traB and traD. The polyketide synthase module (PKS) of traA is responsible for the synthesis of the polyketide backbone via the condensation of an acetyl-CoA starter unit with 3 malonyl-CoA units. The downstream nonribosomal peptide synthetase (NRPS) module then amidates the carboxyl end of the polyketide with L-malic acid. Because traA lacks a designated enoylreductase (ER) domain, the required activity is provided the enoyl reductase traG. Crustosic acid undergoes decarboxylation and isomerization to the terrestric acid, catalyzed by the 2-oxoglutarate-dependent dioxygenase traH. Both acids are further converted to the 2 gamma-butyrolactones (R)-5-methyltetronic acid and (S)-5-carboxylmethyltetronic acid, with involvement of the cytochrome P450 monooxygenase claJ. Spontaneous addition of the methide to these gamma-butyrolactones leads to peniphenone D and penilactone D, which undergo again stereospecific attacking by methide to give penilactones A and B. This chain is 2-oxoglutarate-dependent dioxygenase traH, found in Penicillium crustosum (Blue mold fungus).